The primary structure comprises 44 residues: Photosystem I reaction center subunit IX (44 aa).

Residues Y7 to I27 form a helical membrane-spanning segment.

The protein belongs to the PsaJ family.

It localises to the plastid. The protein resides in the chloroplast thylakoid membrane. In terms of biological role, may help in the organization of the PsaE and PsaF subunits. The protein is Photosystem I reaction center subunit IX of Drimys granadensis.